The chain runs to 188 residues: GMP synthase [glutamine-hydrolyzing] subunit A (188 aa).

Positions 1–188 constitute a Glutamine amidotransferase type-1 domain; that stretch reads MIVIMDNGGQ…RNFAKLCGEL (188 aa). Catalysis depends on Cys78, which acts as the Nucleophile. Active-site residues include His165 and Glu167.

As to quaternary structure, heterodimer composed of a glutamine amidotransferase subunit (A) and a GMP-binding subunit (B).

It catalyses the reaction XMP + L-glutamine + ATP + H2O = GMP + L-glutamate + AMP + diphosphate + 2 H(+). It participates in purine metabolism; GMP biosynthesis; GMP from XMP (L-Gln route): step 1/1. In terms of biological role, catalyzes the synthesis of GMP from XMP. In Pyrococcus abyssi (strain GE5 / Orsay), this protein is GMP synthase [glutamine-hydrolyzing] subunit A.